The chain runs to 123 residues: Small ribosomal subunit protein uS12 (123 aa).

The disordered stretch occupies residues 1–24 (MPTINQLIRKERKKQVKKSKSPAL). Residues 10–20 (KERKKQVKKSK) show a composition bias toward basic residues. D89 bears the 3-methylthioaspartic acid mark.

The protein belongs to the universal ribosomal protein uS12 family. As to quaternary structure, part of the 30S ribosomal subunit. Contacts proteins S8 and S17. May interact with IF1 in the 30S initiation complex.

Its function is as follows. With S4 and S5 plays an important role in translational accuracy. Functionally, interacts with and stabilizes bases of the 16S rRNA that are involved in tRNA selection in the A site and with the mRNA backbone. Located at the interface of the 30S and 50S subunits, it traverses the body of the 30S subunit contacting proteins on the other side and probably holding the rRNA structure together. The combined cluster of proteins S8, S12 and S17 appears to hold together the shoulder and platform of the 30S subunit. The sequence is that of Small ribosomal subunit protein uS12 from Sulfurovum sp. (strain NBC37-1).